The chain runs to 407 residues: Arginine deiminase (407 aa).

Cys397 (amidino-cysteine intermediate) is an active-site residue.

It belongs to the arginine deiminase family.

The protein localises to the cytoplasm. The catalysed reaction is L-arginine + H2O = L-citrulline + NH4(+). It functions in the pathway amino-acid degradation; L-arginine degradation via ADI pathway; carbamoyl phosphate from L-arginine: step 1/2. The chain is Arginine deiminase from Salmonella arizonae (strain ATCC BAA-731 / CDC346-86 / RSK2980).